We begin with the raw amino-acid sequence, 219 residues long: Chalcone--flavanone isomerase (219 aa).

T50, N115, and S188 together coordinate substrate.

It belongs to the chalcone isomerase family.

It carries out the reaction a chalcone = a flavanone.. It functions in the pathway secondary metabolite biosynthesis; flavonoid biosynthesis. Its function is as follows. Catalyzes the intramolecular cyclization of bicyclic chalcones into tricyclic (S)-flavanones. Responsible for the isomerization of 4,2',4',6'-tetrahydroxychalcone (also termed chalcone) into naringenin. The sequence is that of Chalcone--flavanone isomerase (CHI) from Clitoria ternatea (Butterfly pea).